A 296-amino-acid polypeptide reads, in one-letter code: Polyadenylate-binding protein 2 (296 aa).

The tract at residues 1-102 (MAAVSSAASL…EEEPGELTGD (102 aa)) is disordered. Composition is skewed to gly residues over residues 19–31 (LRGGAGPSGGGQD) and 71–82 (GRGGSGGGGAGG). Residues 84–97 (EELEDEELEEEEPG) show a composition bias toward acidic residues. The stretch at 107-141 (DPELEAIKARVREMEEEAEKLKELQNEVEKQMNMS) forms a coiled coil. The necessary for homooligomerization stretch occupies residues 146 to 296 (NAGPVIMSIE…ARVTSWYTPY (151 aa)). An RRM domain is found at 163 to 240 (RSIYVGNVDY…RQIKVVPKRT (78 aa)).

In terms of assembly, monomer and homooligomer. Binds RNA as a monomer and oligomerizes when bound to poly(A).

It localises to the nucleus. The protein localises to the cytoplasm. In terms of biological role, involved in the 3'-end formation of mRNA precursors (pre-mRNA) by the addition of a poly(A) tail of 200-250 nt to the upstream cleavage product. Stimulates poly(A) polymerase (PAPOLA) conferring processivity on the poly(A) tail elongation reaction and also controls the poly(A) tail length. Increases the affinity of poly(A) polymerase for RNA. Binds to poly(A) and to poly(G) with high affinity. May protect the poly(A) tail from degradation. This is Polyadenylate-binding protein 2 from Xenopus tropicalis (Western clawed frog).